A 340-amino-acid polypeptide reads, in one-letter code: Aurora kinase A- and ninein-interacting protein (340 aa).

The tract at residues 175–340 (QREAKRKGEG…DSEGNRVIRH (166 aa)) is interaction with AURKA. Positions 178 to 190 (AKRKGEGLRESKT) are enriched in basic and acidic residues. The disordered stretch occupies residues 178–209 (AKRKGEGLRESKTDCPGMGSHIRPPGSKCHQP). The segment at 266 to 340 (RDSWSQLFTE…DSEGNRVIRH (75 aa)) is interaction with RBBP8/CtIP. The residue at position 277 (serine 277) is a Phosphoserine. The tract at residues 293-317 (DVTNARNQGSGQFPDSPQAQGQDGP) is disordered. A compositionally biased stretch (polar residues) spans 296–313 (NARNQGSGQFPDSPQAQG).

Belongs to the AUNIP family. As to quaternary structure, interacts (via C-terminus) with AURKA (via C-terminus). Interacts (via N-terminus) with NIN; this interaction blocks NIN phosphorylation by both AURKA and GSK3B. Identified in a complex with NIN and AURKA. Interacts with RBBP8/CtIP.

The protein localises to the nucleus. The protein resides in the chromosome. Its subcellular location is the cytoplasm. It is found in the cytoskeleton. It localises to the microtubule organizing center. The protein localises to the centrosome. The protein resides in the spindle pole. In terms of biological role, DNA-binding protein that accumulates at DNA double-strand breaks (DSBs) following DNA damage and promotes DNA resection and homologous recombination. Serves as a sensor of DNA damage: binds DNA with a strong preference for DNA substrates that mimic structures generated at stalled replication forks, and anchors RBBP8/CtIP to DSB sites to promote DNA end resection and ensuing homologous recombination repair. Inhibits non-homologous end joining (NHEJ). Required for the dynamic movement of AURKA at the centrosomes and spindle apparatus during the cell cycle. This chain is Aurora kinase A- and ninein-interacting protein, found in Mus musculus (Mouse).